The following is a 332-amino-acid chain: UPF0194 membrane protein YbhG (332 aa).

Residues M1–A16 form the signal peptide. A coiled-coil region spans residues E108–A209.

The protein belongs to the UPF0194 family.

It is found in the periplasm. The polypeptide is UPF0194 membrane protein YbhG (Escherichia coli O127:H6 (strain E2348/69 / EPEC)).